A 139-amino-acid chain; its full sequence is Non-structural protein 1 (139 aa).

The short motif at 136–139 (DLNP) is the DLNP; interaction with MAP1B element.

It belongs to the pneumovirus non-structural protein 1 family. As to quaternary structure, monomer. Homomultimer. Heteromultimer with NS2. Interacts with the matrix protein M. Interacts with host ELOC and CUL2; this interaction allows NS1 to form an active E3 ligase with ELOC and CUL2. Interacts with host IRF3; this interaction leads to the disrupted association of IRF3 with CREBBP and thus reduced binding of IRF3 to the IFN-beta promoter. Interacts with host MAVS; this interaction prevents MAVS binding to RIGI and inhibits signaling pathway leading to interferon production. Interacts with host MAP1B/microtubule-associated protein 1B. Interacts with host TRIM25 (via SPRY domain); this interaction suppresses RIGI ubiquitination and results in decreased interaction between RIGI and MAVS.

Its subcellular location is the host cytoplasm. The protein localises to the host mitochondrion. It is found in the host nucleus. Its function is as follows. Plays a major role in antagonizing the type I IFN-mediated antiviral response by degrading or inhibiting multiple cellular factors required for either IFN induction or response pathways. Acts cooperatively with NS2 to repress activation and nuclear translocation of host IFN-regulatory factor IRF3. Also disrupts the association of IRF3 with CREBBP. Interacts with host mitochondrial-associated membrane (MAM) MAVS and prevents the interaction with RIGI. Interacts with TRIM25 to suppress TRIM25-mediated RIGI ubiquitination and thereby RIGI-MAVS interaction. Together with NS2, participates in the proteasomal degradation of host STAT2, IRF3, IRF7, TBK1 and RIGI through a NS-degradasome involving CUL2 and Elongin-C. The degradasome requires an intact mitochondrial MAVS. Decreases the levels of host TRAF3 and IKBKE/IKK-epsilon. As functions other than disruptions of the type I IFN-mediated antiviral signaling pathways, induces host SOCS1 and SOCS3 expression. Suppresses premature apoptosis by an NF-kappa-B-dependent, interferon-independent mechanism and thus facilitates virus growth. Additionally, NS1 may serve some inhibitory role in viral transcription and RNA replication. Suppresses proliferation and activation of host CD103+ CD8+ cytotoxic T-lymphocytes and Th17 helper T-lymphocytes. This is Non-structural protein 1 (1C) from Homo sapiens (Human).